The following is a 122-amino-acid chain: Nuclear transcription factor Y subunit beta (122 aa).

A subunit association domain (SAD) region spans residues 1-12 (VQECVSEFISFI). Residues 1 to 57 (VQECVSEFISFITSEASERCHQEKRKTINGEDILFAMSTLGFDSYVEPLKLYLQKFR) are b domain. The segment at 58 to 122 (EAMKGEKGIG…ISGVQQIQFS (65 aa)) is c domain.

Belongs to the NFYB/HAP3 subunit family. As to quaternary structure, heterotrimeric transcription factor composed of three components, NF-YA, NF-YB and NF-YC. NF-YB and NF-YC must interact and dimerize for NF-YA association and DNA binding.

It localises to the nucleus. Component of the sequence-specific heterotrimeric transcription factor (NF-Y) which specifically recognizes a 5'-CCAAT-3' box motif found in the promoters of its target genes. NF-Y can function as both an activator and a repressor, depending on its interacting cofactors. This Xenopus laevis (African clawed frog) protein is Nuclear transcription factor Y subunit beta (nfyb).